The sequence spans 428 residues: MADYVIQNLTSNLQAMQYAYSSREEMPVWATKLLTPIFMAVAVLTTLPPPGPLRVIVGLTAFTSLWLHVLTHWVSGPAFFMDAIFMISITVRWLLMFVAGTPEIDYHQTTQSGTTITHKGTKDSSTLRQGLTKLRWSVELWSCWRGQGWNFVDQHLPRGAERTQSRWEFLVSNAGRVLLNQYISDLVRKYAFCALWPAQVDAHVDFSSLPLLNRHGLVALQLIRDSLMLDSEYRKASILFVGLHLSTPDRWPSLFGNMRDLYTVRNFWGRVWHQIFRQIFTRCGDIVANALNAQKGTLLYKYSRLYVGFLVSGVQHYACALLIPSAEYGWGMFWQMPAYAAVVTVEDILKYYGREAGIQDGNFVRFLGYIWTAYWMTLIYALPVGFVSDIGGFTGDGNFQLSDPCVSCSSTSIPVSGFESIDLEFGLW.

Asparagine 8 carries N-linked (GlcNAc...) asparagine glycosylation. Transmembrane regions (helical) follow at residues 33 to 53 (LLTPIFMAVAVLTTLPPPGPL), 55 to 75 (VIVGLTAFTSLWLHVLTHWVS), 78 to 98 (AFFMDAIFMISITVRWLLMFV), 305 to 325 (LYVGFLVSGVQHYACALLIPS), 329 to 349 (GWGMFWQMPAYAAVVTVEDIL), and 366 to 386 (FLGYIWTAYWMTLIYALPVGF).

Belongs to the wax synthase family.

The protein localises to the membrane. It functions in the pathway polyketide biosynthesis. In terms of biological role, acetyltransferase; part of the gene cluster that mediates the biosynthesis of asperlin, a polyketide showing anti-inflammatory, antitumor and antibiotic activities. The first step of the asperlin biosynthesis is the production of the intermediate 2,4,6-octatrienoic acid by the highly redusing polyketide synthase alnA with cleavage of the PKS product by the esterase alnB. 2,4,6-octatrienoic acid is further converted to asperlin via several steps involving the remaining enzymes from the cluster. The protein is Acetyltransferase sirH of Emericella nidulans (strain FGSC A4 / ATCC 38163 / CBS 112.46 / NRRL 194 / M139) (Aspergillus nidulans).